The following is a 331-amino-acid chain: 6-phosphogluconolactonase (331 aa).

It belongs to the cycloisomerase 2 family.

The enzyme catalyses 6-phospho-D-glucono-1,5-lactone + H2O = 6-phospho-D-gluconate + H(+). The protein operates within carbohydrate degradation; pentose phosphate pathway; D-ribulose 5-phosphate from D-glucose 6-phosphate (oxidative stage): step 2/3. Catalyzes the hydrolysis of 6-phosphogluconolactone to 6-phosphogluconate. This Salmonella paratyphi B (strain ATCC BAA-1250 / SPB7) protein is 6-phosphogluconolactonase.